The following is a 277-amino-acid chain: F420-dependent methylenetetrahydromethanopterin dehydrogenase (277 aa).

The protein belongs to the MTD family.

The catalysed reaction is 5,10-methylenetetrahydromethanopterin + oxidized coenzyme F420-(gamma-L-Glu)(n) + 2 H(+) = 5,10-methenyl-5,6,7,8-tetrahydromethanopterin + reduced coenzyme F420-(gamma-L-Glu)(n). The protein operates within one-carbon metabolism; methanogenesis from CO(2); 5,10-methylene-5,6,7,8-tetrahydromethanopterin from 5,10-methenyl-5,6,7,8-tetrahydromethanopterin (coenzyme F420 route): step 1/1. In terms of biological role, catalyzes the reversible reduction of methenyl-H(4)MPT(+) to methylene-H(4)MPT. The sequence is that of F420-dependent methylenetetrahydromethanopterin dehydrogenase from Methanococcus maripaludis (strain C7 / ATCC BAA-1331).